The following is a 307-amino-acid chain: Protoheme IX farnesyltransferase (307 aa).

The next 8 helical transmembrane spans lie at 32–52 (VVEL…RGIP), 54–74 (LWLV…AGAF), 105–125 (LVFA…FTNW), 126–146 (LAAG…TLIL), 169–189 (WAVV…VIFL), 222–242 (VVGL…LLLI), 244–264 (VARM…WFLY), and 287–307 (GSIA…LLPF).

Belongs to the UbiA prenyltransferase family. Protoheme IX farnesyltransferase subfamily.

Its subcellular location is the cell membrane. The enzyme catalyses heme b + (2E,6E)-farnesyl diphosphate + H2O = Fe(II)-heme o + diphosphate. The protein operates within porphyrin-containing compound metabolism; heme O biosynthesis; heme O from protoheme: step 1/1. In terms of biological role, converts heme B (protoheme IX) to heme O by substitution of the vinyl group on carbon 2 of heme B porphyrin ring with a hydroxyethyl farnesyl side group. This is Protoheme IX farnesyltransferase from Leifsonia xyli subsp. xyli (strain CTCB07).